We begin with the raw amino-acid sequence, 353 residues long: Farnesyl pyrophosphate synthase (353 aa).

Residues K57, R60, and Q96 each coordinate isopentenyl diphosphate. K57 is modified (N6-(2-hydroxyisobutyryl)lysine; alternate). K57 is subject to N6-acetyllysine; alternate. Positions 103 and 107 each coordinate Mg(2+). R112 serves as a coordination point for dimethylallyl diphosphate. Residue R113 coordinates isopentenyl diphosphate. The dimethylallyl diphosphate site is built by K200, T201, Q240, K257, and K266.

The protein belongs to the FPP/GGPP synthase family. In terms of assembly, homodimer. Interacts with RSAD2. The cofactor is Mg(2+). As to expression, testis, liver, kidney, brain and adrenal gland.

Its subcellular location is the cytoplasm. It catalyses the reaction isopentenyl diphosphate + dimethylallyl diphosphate = (2E)-geranyl diphosphate + diphosphate. The catalysed reaction is isopentenyl diphosphate + (2E)-geranyl diphosphate = (2E,6E)-farnesyl diphosphate + diphosphate. The protein operates within isoprenoid biosynthesis; farnesyl diphosphate biosynthesis; farnesyl diphosphate from geranyl diphosphate and isopentenyl diphosphate: step 1/1. It participates in isoprenoid biosynthesis; geranyl diphosphate biosynthesis; geranyl diphosphate from dimethylallyl diphosphate and isopentenyl diphosphate: step 1/1. Its activity is regulated as follows. Inactivated by interferon-induced RSAD2. This inactivation may result of disruption of lipid rafts at the plasma membrane, and thus have an antiviral effect since many enveloped viruses need lipid rafts to bud efficiently out of the cell. In terms of biological role, key enzyme in isoprenoid biosynthesis which catalyzes the formation of farnesyl diphosphate (FPP), a precursor for several classes of essential metabolites including sterols, dolichols, carotenoids, and ubiquinones. FPP also serves as substrate for protein farnesylation and geranylgeranylation. Catalyzes the sequential condensation of isopentenyl pyrophosphate with the allylic pyrophosphates, dimethylallyl pyrophosphate, and then with the resultant geranylpyrophosphate to the ultimate product farnesyl pyrophosphate. This Rattus norvegicus (Rat) protein is Farnesyl pyrophosphate synthase (Fdps).